We begin with the raw amino-acid sequence, 60 residues long: Large ribosomal subunit protein uL30 (60 aa).

Belongs to the universal ribosomal protein uL30 family. As to quaternary structure, part of the 50S ribosomal subunit.

This Carboxydothermus hydrogenoformans (strain ATCC BAA-161 / DSM 6008 / Z-2901) protein is Large ribosomal subunit protein uL30.